The following is an 85-amino-acid chain: Protein BTH_I0359 (85 aa).

This chain is Protein BTH_I0359, found in Burkholderia thailandensis (strain ATCC 700388 / DSM 13276 / CCUG 48851 / CIP 106301 / E264).